The chain runs to 276 residues: N-acyl homoserine lactonase AiiB (276 aa).

The Zn(2+) site is built by His-111, His-113, His-116, His-191, Asp-213, and His-259.

This sequence belongs to the metallo-beta-lactamase superfamily. Requires Zn(2+) as cofactor.

It carries out the reaction an N-acyl-L-homoserine lactone + H2O = an N-acyl-L-homoserine + H(+). This Agrobacterium fabrum (strain C58 / ATCC 33970) (Agrobacterium tumefaciens (strain C58)) protein is N-acyl homoserine lactonase AiiB.